Consider the following 246-residue polypeptide: Pyridoxine 5'-phosphate synthase (246 aa).

Position 10 (Asn10) interacts with 3-amino-2-oxopropyl phosphate. 12 to 13 contributes to the 1-deoxy-D-xylulose 5-phosphate binding site; the sequence is DH. A 3-amino-2-oxopropyl phosphate-binding site is contributed by Arg21. His46 serves as the catalytic Proton acceptor. Residues Arg48 and His53 each contribute to the 1-deoxy-D-xylulose 5-phosphate site. Glu73 acts as the Proton acceptor in catalysis. Thr103 serves as a coordination point for 1-deoxy-D-xylulose 5-phosphate. The Proton donor role is filled by His193. Residues Gly194 and 215-216 each bind 3-amino-2-oxopropyl phosphate; that span reads GH.

This sequence belongs to the PNP synthase family. In terms of assembly, homooctamer; tetramer of dimers.

It is found in the cytoplasm. The enzyme catalyses 3-amino-2-oxopropyl phosphate + 1-deoxy-D-xylulose 5-phosphate = pyridoxine 5'-phosphate + phosphate + 2 H2O + H(+). The protein operates within cofactor biosynthesis; pyridoxine 5'-phosphate biosynthesis; pyridoxine 5'-phosphate from D-erythrose 4-phosphate: step 5/5. Functionally, catalyzes the complicated ring closure reaction between the two acyclic compounds 1-deoxy-D-xylulose-5-phosphate (DXP) and 3-amino-2-oxopropyl phosphate (1-amino-acetone-3-phosphate or AAP) to form pyridoxine 5'-phosphate (PNP) and inorganic phosphate. This Rhodopirellula baltica (strain DSM 10527 / NCIMB 13988 / SH1) protein is Pyridoxine 5'-phosphate synthase.